A 236-amino-acid chain; its full sequence is Urease accessory protein UreG 2 (236 aa).

The segment at 1-40 is disordered; sequence MEASVHIGNSVPHAHLHSAAPARPADPVRPDGSRRALRIG. 43–50 is a binding site for GTP; the sequence is GPVGSGKT.

Belongs to the SIMIBI class G3E GTPase family. UreG subfamily. In terms of assembly, homodimer. UreD, UreF and UreG form a complex that acts as a GTP-hydrolysis-dependent molecular chaperone, activating the urease apoprotein by helping to assemble the nickel containing metallocenter of UreC. The UreE protein probably delivers the nickel.

It is found in the cytoplasm. In terms of biological role, facilitates the functional incorporation of the urease nickel metallocenter. This process requires GTP hydrolysis, probably effectuated by UreG. This chain is Urease accessory protein UreG 2, found in Saccharopolyspora erythraea (strain ATCC 11635 / DSM 40517 / JCM 4748 / NBRC 13426 / NCIMB 8594 / NRRL 2338).